Consider the following 320-residue polypeptide: Small ribosomal subunit protein mS35 (320 aa).

The disordered stretch occupies residues 24 to 63; that stretch reads SVASPAAPRAGPRTASRSERPMRRKALPPRTEKMDTDQDW.

Belongs to the mitochondrion-specific ribosomal protein mS35 family. In terms of assembly, component of the mitochondrial ribosome small subunit (28S) which comprises a 12S rRNA and about 30 distinct proteins.

The protein resides in the mitochondrion. In Mus musculus (Mouse), this protein is Small ribosomal subunit protein mS35.